We begin with the raw amino-acid sequence, 386 residues long: Probable dual-specificity RNA methyltransferase RlmN (386 aa).

Glutamate 123 serves as the catalytic Proton acceptor. The Radical SAM core domain maps to 129-372 (YPTRTTLCIS…ATLRDTRGQD (244 aa)). A disulfide bridge connects residues cysteine 136 and cysteine 377. [4Fe-4S] cluster-binding residues include cysteine 143, cysteine 147, and cysteine 150. S-adenosyl-L-methionine is bound by residues 198–199 (GE), serine 232, 255–257 (SLH), and asparagine 334. The active-site S-methylcysteine intermediate is cysteine 377.

Belongs to the radical SAM superfamily. RlmN family. [4Fe-4S] cluster serves as cofactor.

It localises to the cytoplasm. The enzyme catalyses adenosine(2503) in 23S rRNA + 2 reduced [2Fe-2S]-[ferredoxin] + 2 S-adenosyl-L-methionine = 2-methyladenosine(2503) in 23S rRNA + 5'-deoxyadenosine + L-methionine + 2 oxidized [2Fe-2S]-[ferredoxin] + S-adenosyl-L-homocysteine. The catalysed reaction is adenosine(37) in tRNA + 2 reduced [2Fe-2S]-[ferredoxin] + 2 S-adenosyl-L-methionine = 2-methyladenosine(37) in tRNA + 5'-deoxyadenosine + L-methionine + 2 oxidized [2Fe-2S]-[ferredoxin] + S-adenosyl-L-homocysteine. Specifically methylates position 2 of adenine 2503 in 23S rRNA and position 2 of adenine 37 in tRNAs. The polypeptide is Probable dual-specificity RNA methyltransferase RlmN (Bifidobacterium adolescentis (strain ATCC 15703 / DSM 20083 / NCTC 11814 / E194a)).